The primary structure comprises 147 residues: Deoxyuridine 5'-triphosphate nucleotidohydrolase (147 aa).

Residues 63-65 (RSG), Asn76, and 80-82 (TID) each bind substrate.

It belongs to the dUTPase family. It depends on Mg(2+) as a cofactor.

It catalyses the reaction dUTP + H2O = dUMP + diphosphate + H(+). The protein operates within pyrimidine metabolism; dUMP biosynthesis; dUMP from dCTP (dUTP route): step 2/2. This enzyme is involved in nucleotide metabolism: it produces dUMP, the immediate precursor of thymidine nucleotides and it decreases the intracellular concentration of dUTP so that uracil cannot be incorporated into DNA. The protein is Deoxyuridine 5'-triphosphate nucleotidohydrolase of Chlamydia felis (strain Fe/C-56) (Chlamydophila felis).